The chain runs to 418 residues: 3-phosphoshikimate 1-carboxyvinyltransferase (418 aa).

3-phosphoshikimate contacts are provided by lysine 26, serine 27, and arginine 31. Residue lysine 26 coordinates phosphoenolpyruvate. Positions 97 and 125 each coordinate phosphoenolpyruvate. 3-phosphoshikimate contacts are provided by serine 170, serine 171, glutamine 172, aspartate 297, asparagine 320, and lysine 324. Glutamine 172 is a binding site for phosphoenolpyruvate. The Proton acceptor role is filled by aspartate 297. The phosphoenolpyruvate site is built by arginine 328, arginine 375, and lysine 400.

Belongs to the EPSP synthase family. As to quaternary structure, monomer.

It localises to the cytoplasm. The catalysed reaction is 3-phosphoshikimate + phosphoenolpyruvate = 5-O-(1-carboxyvinyl)-3-phosphoshikimate + phosphate. It participates in metabolic intermediate biosynthesis; chorismate biosynthesis; chorismate from D-erythrose 4-phosphate and phosphoenolpyruvate: step 6/7. Functionally, catalyzes the transfer of the enolpyruvyl moiety of phosphoenolpyruvate (PEP) to the 5-hydroxyl of shikimate-3-phosphate (S3P) to produce enolpyruvyl shikimate-3-phosphate and inorganic phosphate. This is 3-phosphoshikimate 1-carboxyvinyltransferase from Pseudomonas syringae pv. tomato (strain ATCC BAA-871 / DC3000).